The primary structure comprises 149 residues: SsrA-binding protein (149 aa).

The protein belongs to the SmpB family.

The protein localises to the cytoplasm. Required for rescue of stalled ribosomes mediated by trans-translation. Binds to transfer-messenger RNA (tmRNA), required for stable association of tmRNA with ribosomes. tmRNA and SmpB together mimic tRNA shape, replacing the anticodon stem-loop with SmpB. tmRNA is encoded by the ssrA gene; the 2 termini fold to resemble tRNA(Ala) and it encodes a 'tag peptide', a short internal open reading frame. During trans-translation Ala-aminoacylated tmRNA acts like a tRNA, entering the A-site of stalled ribosomes, displacing the stalled mRNA. The ribosome then switches to translate the ORF on the tmRNA; the nascent peptide is terminated with the 'tag peptide' encoded by the tmRNA and targeted for degradation. The ribosome is freed to recommence translation, which seems to be the essential function of trans-translation. In Mesoplasma florum (strain ATCC 33453 / NBRC 100688 / NCTC 11704 / L1) (Acholeplasma florum), this protein is SsrA-binding protein.